A 650-amino-acid polypeptide reads, in one-letter code: A-kinase anchor protein 10, mitochondrial (650 aa).

The N-terminal 16 residues, 1-16 (RALRPDPGPAMSFFRR), are a transit peptide targeting the mitochondrion. 2 disordered regions span residues 1–45 (RALR…QKST) and 168–192 (SSLAEPVSPTQKHETAAAPVTESLD). At Ser40 the chain carries Phosphoserine. 2 RGS domains span residues 113–356 (TLEQ…CKYQ) and 366–493 (YLAD…YKYL). Ser268 is modified (phosphoserine). Residues 512-535 (LAAQGSGGPPDDPLPGASDPSASQ) are disordered. Low complexity predominate over residues 525–535 (LPGASDPSASQ). Positions 622 to 635 (LAWKIAKMIVSDVM) are PKA-RII subunit binding.

It localises to the mitochondrion. The protein localises to the membrane. Its subcellular location is the cytoplasm. In terms of biological role, differentially targeted protein that binds to type I and II regulatory subunits of protein kinase A and anchors them to the mitochondria or the plasma membrane. Although the physiological relevance between PKA and AKAPS with mitochondria is not fully understood, one idea is that BAD, a proapoptotic member, is phosphorylated and inactivated by mitochondria-anchored PKA. It cannot be excluded too that it may facilitate PKA as well as G protein signal transduction, by acting as an adapter for assembling multiprotein complexes. With its RGS domain, it could lead to the interaction to G-alpha proteins, providing a link between the signaling machinery and the downstream kinase. The chain is A-kinase anchor protein 10, mitochondrial (AKAP10) from Sus scrofa (Pig).